Consider the following 172-residue polypeptide: NAD(P)H-quinone oxidoreductase subunit I, chloroplastic (172 aa).

2 consecutive 4Fe-4S ferredoxin-type domains span residues 55–84 and 95–124; these read GRIH…VDWK and LNYS…MTEE. [4Fe-4S] cluster-binding residues include Cys-64, Cys-67, Cys-70, Cys-74, Cys-104, Cys-107, Cys-110, and Cys-114.

The protein belongs to the complex I 23 kDa subunit family. As to quaternary structure, NDH is composed of at least 16 different subunits, 5 of which are encoded in the nucleus. The cofactor is [4Fe-4S] cluster.

The protein localises to the plastid. It localises to the chloroplast thylakoid membrane. The catalysed reaction is a plastoquinone + NADH + (n+1) H(+)(in) = a plastoquinol + NAD(+) + n H(+)(out). It catalyses the reaction a plastoquinone + NADPH + (n+1) H(+)(in) = a plastoquinol + NADP(+) + n H(+)(out). NDH shuttles electrons from NAD(P)H:plastoquinone, via FMN and iron-sulfur (Fe-S) centers, to quinones in the photosynthetic chain and possibly in a chloroplast respiratory chain. The immediate electron acceptor for the enzyme in this species is believed to be plastoquinone. Couples the redox reaction to proton translocation, and thus conserves the redox energy in a proton gradient. This is NAD(P)H-quinone oxidoreductase subunit I, chloroplastic from Arabidopsis thaliana (Mouse-ear cress).